The chain runs to 221 residues: DNA repair and recombination protein RadB (221 aa).

It belongs to the eukaryotic RecA-like protein family. RadB subfamily.

In terms of biological role, involved in DNA repair and in homologous recombination. May regulate the cleavage reactions of the branch-structured DNA. Has a very weak ATPase activity that is not stimulated by DNA. Binds DNA but does not promote DNA strands exchange. In Thermococcus gammatolerans (strain DSM 15229 / JCM 11827 / EJ3), this protein is DNA repair and recombination protein RadB.